The primary structure comprises 319 residues: Forkhead box protein B1 (319 aa).

The fork-head DNA-binding region spans 13 to 107 (KPPYSYISLT…ENGSFLRRRK (95 aa)). Residues 278–310 (LSNSSPSMSPTSPQTATSQSSPATPSDTLTNPS) form a disordered region. The segment covering 279 to 305 (SNSSPSMSPTSPQTATSQSSPATPSDT) has biased composition (low complexity).

In early gastrulae, expressed in the inner layer of the posterior dorsal ectoderm and in non-involuted mesoderm. By the mid-gastrula stage, expressed solely in the posterior ectoderm. At the end of gastrulation, expressed in ectodermal regions fated to become diencephalon, midbrain and hindbrain, and weakly expressed in regions fated to become spinal cord and tailbud. At the neurula stage, expressed in the midbrain and posterior forebrain (diencephalon) but not in the more anterior forebrain (telencephalon). Also expressed posteriorly in rhombomere 5. At tailbud stages, expression remains in the anterior brain and is also detectable along the length of the central nervous system and in the tailbud.

Its subcellular location is the nucleus. In terms of biological role, probable transcription factor. May be involved in the early anteroposterior patterning of the neuroectoderm. The sequence is that of Forkhead box protein B1 from Xenopus laevis (African clawed frog).